A 108-amino-acid chain; its full sequence is Large ribosomal subunit protein uL23 (108 aa).

The protein belongs to the universal ribosomal protein uL23 family. Part of the 50S ribosomal subunit. Contacts protein L29, and trigger factor when it is bound to the ribosome.

Functionally, one of the early assembly proteins it binds 23S rRNA. One of the proteins that surrounds the polypeptide exit tunnel on the outside of the ribosome. Forms the main docking site for trigger factor binding to the ribosome. This chain is Large ribosomal subunit protein uL23, found in Leptothrix cholodnii (strain ATCC 51168 / LMG 8142 / SP-6) (Leptothrix discophora (strain SP-6)).